A 431-amino-acid chain; its full sequence is Na(+)/H(+) antiporter NhaA 1 (431 aa).

A run of 11 helical transmembrane segments spans residues 17-37, 56-76, 98-118, 123-143, 154-174, 182-202, 209-229, 301-321, 329-349, 373-393, and 400-420; these read LSGI…NSNF, FIIS…LFFL, MFPF…YIAL, FIGF…MLIL, LFLV…VATV, EYFL…YFDV, LFLG…ATIA, FSAF…LLDF, MIVL…IFGF, VGFI…LAFI, and AIKI…MILI.

This sequence belongs to the NhaA Na(+)/H(+) (TC 2.A.33) antiporter family.

It localises to the cell inner membrane. The enzyme catalyses Na(+)(in) + 2 H(+)(out) = Na(+)(out) + 2 H(+)(in). Functionally, na(+)/H(+) antiporter that extrudes sodium in exchange for external protons. The chain is Na(+)/H(+) antiporter NhaA 1 from Aliarcobacter butzleri (strain RM4018) (Arcobacter butzleri).